A 279-amino-acid polypeptide reads, in one-letter code: Zinc finger CCCH domain-containing protein 1 (279 aa).

Residues 20-45 form a disordered region; the sequence is DVIVLSPGPPARRRPPPVKAVEPESG. C3H1-type zinc fingers lie at residues 56-84 and 139-167; these read FYKT…HGDE and RAIT…HVSA.

The protein is Zinc finger CCCH domain-containing protein 1 of Oryza sativa subsp. japonica (Rice).